Here is a 236-residue protein sequence, read N- to C-terminus: Small ribosomal subunit protein uS2c (236 aa).

This sequence belongs to the universal ribosomal protein uS2 family.

It is found in the plastid. The protein localises to the chloroplast. The polypeptide is Small ribosomal subunit protein uS2c (rps2) (Amborella trichopoda).